Consider the following 79-residue polypeptide: UPF0154 protein SSP1415 (79 aa).

Residues 4-24 (WLAIVLIVLALILGLVGGFFL) traverse the membrane as a helical segment.

The protein belongs to the UPF0154 family.

It is found in the membrane. This chain is UPF0154 protein SSP1415, found in Staphylococcus saprophyticus subsp. saprophyticus (strain ATCC 15305 / DSM 20229 / NCIMB 8711 / NCTC 7292 / S-41).